The sequence spans 178 residues: Large ribosomal subunit protein uL6 (178 aa).

Belongs to the universal ribosomal protein uL6 family. Part of the 50S ribosomal subunit. Interacts weakly with protein L13.

This protein binds to the 23S rRNA, and is important in its secondary structure. It is located near the subunit interface in the base of the L7/L12 stalk, and near the tRNA binding site of the peptidyltransferase center. This chain is Large ribosomal subunit protein uL6, found in Haloarcula marismortui (strain ATCC 43049 / DSM 3752 / JCM 8966 / VKM B-1809) (Halobacterium marismortui).